Consider the following 319-residue polypeptide: MSLNFLDFEKPIVELETKIQALRDVSRHSTSASVDLDKELEQLEKKSLELKKKIFSDLGAWQVAQLARHPQRPYTLDYLKHIFTEFDELAGDRAYADDKAIVGGIARLEGRSVMVIGHQKGRETREKVKRNFGMPKPEGYRKALRLMEMAERFNMPIITFIDTAGAYPGVGAEERGQSEAIAKNLKVMSGLKVPVICNVVGEGGSGGALAIGVGDYVNMLQYSTYSVISPEGCASILWRDSDKAPQAAEAMGLIAPRLKELELIDEIIEEPLGGAHRDHKQTAENVKATLLRQLADLDALDHENLLERRYQRLMNYGYC.

Positions 35-296 (DLDKELEQLE…KATLLRQLAD (262 aa)) constitute a CoA carboxyltransferase C-terminal domain.

This sequence belongs to the AccA family. As to quaternary structure, acetyl-CoA carboxylase is a heterohexamer composed of biotin carboxyl carrier protein (AccB), biotin carboxylase (AccC) and two subunits each of ACCase subunit alpha (AccA) and ACCase subunit beta (AccD).

The protein resides in the cytoplasm. It carries out the reaction N(6)-carboxybiotinyl-L-lysyl-[protein] + acetyl-CoA = N(6)-biotinyl-L-lysyl-[protein] + malonyl-CoA. It participates in lipid metabolism; malonyl-CoA biosynthesis; malonyl-CoA from acetyl-CoA: step 1/1. Component of the acetyl coenzyme A carboxylase (ACC) complex. First, biotin carboxylase catalyzes the carboxylation of biotin on its carrier protein (BCCP) and then the CO(2) group is transferred by the carboxyltransferase to acetyl-CoA to form malonyl-CoA. This is Acetyl-coenzyme A carboxylase carboxyl transferase subunit alpha from Vibrio cholerae serotype O1 (strain ATCC 39541 / Classical Ogawa 395 / O395).